The following is a 142-amino-acid chain: Large ribosomal subunit protein uL13 (142 aa).

Belongs to the universal ribosomal protein uL13 family. Part of the 50S ribosomal subunit.

Its function is as follows. This protein is one of the early assembly proteins of the 50S ribosomal subunit, although it is not seen to bind rRNA by itself. It is important during the early stages of 50S assembly. In Alkalilimnicola ehrlichii (strain ATCC BAA-1101 / DSM 17681 / MLHE-1), this protein is Large ribosomal subunit protein uL13.